A 151-amino-acid chain; its full sequence is UPF0178 protein PST_0536 (151 aa).

This sequence belongs to the UPF0178 family.

The sequence is that of UPF0178 protein PST_0536 from Stutzerimonas stutzeri (strain A1501) (Pseudomonas stutzeri).